The following is a 281-amino-acid chain: 2,3,4,5-tetrahydropyridine-2,6-dicarboxylate N-succinyltransferase (281 aa).

This sequence belongs to the transferase hexapeptide repeat family.

Its subcellular location is the cytoplasm. It carries out the reaction (S)-2,3,4,5-tetrahydrodipicolinate + succinyl-CoA + H2O = (S)-2-succinylamino-6-oxoheptanedioate + CoA. The protein operates within amino-acid biosynthesis; L-lysine biosynthesis via DAP pathway; LL-2,6-diaminopimelate from (S)-tetrahydrodipicolinate (succinylase route): step 1/3. This Afipia carboxidovorans (strain ATCC 49405 / DSM 1227 / KCTC 32145 / OM5) (Oligotropha carboxidovorans) protein is 2,3,4,5-tetrahydropyridine-2,6-dicarboxylate N-succinyltransferase.